The following is a 144-amino-acid chain: Nucleoside diphosphate kinase (144 aa).

ATP contacts are provided by lysine 11, phenylalanine 59, arginine 87, threonine 93, arginine 104, and asparagine 114. Histidine 117 serves as the catalytic Pros-phosphohistidine intermediate.

Belongs to the NDK family. As to quaternary structure, homotetramer. Mg(2+) is required as a cofactor.

The protein resides in the cytoplasm. It carries out the reaction a 2'-deoxyribonucleoside 5'-diphosphate + ATP = a 2'-deoxyribonucleoside 5'-triphosphate + ADP. The catalysed reaction is a ribonucleoside 5'-diphosphate + ATP = a ribonucleoside 5'-triphosphate + ADP. Major role in the synthesis of nucleoside triphosphates other than ATP. The ATP gamma phosphate is transferred to the NDP beta phosphate via a ping-pong mechanism, using a phosphorylated active-site intermediate. This chain is Nucleoside diphosphate kinase, found in Psychromonas ingrahamii (strain DSM 17664 / CCUG 51855 / 37).